The following is a 72-amino-acid chain: Hirudin variant-2 (72 aa).

The first 7 residues, 1–7, serve as a signal peptide directing secretion; it reads AICVSQA. The segment at 8 to 10 is interaction with thrombin active site; it reads ITY. Disulfide bonds link Cys13-Cys21, Cys23-Cys35, and Cys29-Cys46. The disordered stretch occupies residues 47 to 72; that stretch reads VTGEGTPNPESHNNGDFEEIPEEYLQ. A glycan (O-linked (GalNAc...) threonine) is linked at Thr52. The tract at residues 62 to 72 is interaction with fibrinogen-binding exosite of thrombin; the sequence is DFEEIPEEYLQ. Residues 62 to 72 show a composition bias toward acidic residues; sequence DFEEIPEEYLQ. Position 70 is a sulfotyrosine (Tyr70).

Belongs to the protease inhibitor I14 (hirudin) family.

The protein localises to the secreted. Functionally, hirudin is a potent thrombin-specific protease inhibitor. It forms a stable non-covalent complex with alpha-thrombin, thereby abolishing its ability to cleave fibrinogen. This chain is Hirudin variant-2, found in Hirudo medicinalis (Medicinal leech).